The chain runs to 360 residues: Aminomethyltransferase (360 aa).

This sequence belongs to the GcvT family. As to quaternary structure, the glycine cleavage system is composed of four proteins: P, T, L and H.

The catalysed reaction is N(6)-[(R)-S(8)-aminomethyldihydrolipoyl]-L-lysyl-[protein] + (6S)-5,6,7,8-tetrahydrofolate = N(6)-[(R)-dihydrolipoyl]-L-lysyl-[protein] + (6R)-5,10-methylene-5,6,7,8-tetrahydrofolate + NH4(+). Functionally, the glycine cleavage system catalyzes the degradation of glycine. The protein is Aminomethyltransferase of Legionella pneumophila (strain Paris).